Here is a 139-residue protein sequence, read N- to C-terminus: Trafficking protein particle complex subunit 2-like protein (139 aa).

It belongs to the TRAPP small subunits family. Sedlin subfamily.

It localises to the cytoplasm. The protein resides in the perinuclear region. The protein localises to the endoplasmic reticulum. Its subcellular location is the golgi apparatus. May play a role in vesicular transport from endoplasmic reticulum to Golgi. The protein is Trafficking protein particle complex subunit 2-like protein (TRAPPC2L) of Taeniopygia guttata (Zebra finch).